Here is a 538-residue protein sequence, read N- to C-terminus: Atos homolog protein B (538 aa).

Residues Met-1–Pro-18 are compositionally biased toward low complexity. Disordered stretches follow at residues Met-1 to Gly-103, Asn-153 to Thr-185, Gly-197 to Pro-300, and Ser-323 to Pro-342. A compositionally biased stretch (pro residues) spans His-227–Cys-238. Residues Ser-254 and Ser-255 each carry the phosphoserine modification. Positions Ser-323–Pro-334 are enriched in low complexity. The interval Leu-348–Thr-430 is required for macropage invasion. The interval Gln-436–Val-444 is transactivation domain 1 (TAD1).

It belongs to the ATOS family.

Its subcellular location is the nucleus. Functionally, transcription regulator that may syncronize transcriptional and translational programs. In Pongo abelii (Sumatran orangutan), this protein is Atos homolog protein B.